A 364-amino-acid chain; its full sequence is Mannitol-1-phosphate 5-dehydrogenase (364 aa).

6-17 (VLHFGAGNIGRG) lines the NAD(+) pocket.

Belongs to the mannitol dehydrogenase family.

The enzyme catalyses D-mannitol 1-phosphate + NAD(+) = beta-D-fructose 6-phosphate + NADH + H(+). This chain is Mannitol-1-phosphate 5-dehydrogenase (mtlD), found in Mycoplasma pneumoniae (strain ATCC 29342 / M129 / Subtype 1) (Mycoplasmoides pneumoniae).